The chain runs to 63 residues: Small ribosomal subunit protein eS31 (63 aa).

The Zn(2+) site is built by cysteine 34, cysteine 37, cysteine 53, and cysteine 56. A C4-type zinc finger spans residues 34-56 (CPKCGSVMAFHREPVPRWHCGKC).

This sequence belongs to the eukaryotic ribosomal protein eS31 family. As to quaternary structure, part of the 30S ribosomal subunit. Requires Zn(2+) as cofactor.

This is Small ribosomal subunit protein eS31 from Pyrobaculum neutrophilum (strain DSM 2338 / JCM 9278 / NBRC 100436 / V24Sta) (Thermoproteus neutrophilus).